Reading from the N-terminus, the 258-residue chain is Ubiquinone/menaquinone biosynthesis C-methyltransferase UbiE (258 aa).

S-adenosyl-L-methionine-binding positions include Thr83, Asp104, and 130–131; that span reads DA.

This sequence belongs to the class I-like SAM-binding methyltransferase superfamily. MenG/UbiE family.

The catalysed reaction is a 2-demethylmenaquinol + S-adenosyl-L-methionine = a menaquinol + S-adenosyl-L-homocysteine + H(+). It catalyses the reaction a 2-methoxy-6-(all-trans-polyprenyl)benzene-1,4-diol + S-adenosyl-L-methionine = a 5-methoxy-2-methyl-3-(all-trans-polyprenyl)benzene-1,4-diol + S-adenosyl-L-homocysteine + H(+). Its pathway is quinol/quinone metabolism; menaquinone biosynthesis; menaquinol from 1,4-dihydroxy-2-naphthoate: step 2/2. It participates in cofactor biosynthesis; ubiquinone biosynthesis. Its function is as follows. Methyltransferase required for the conversion of demethylmenaquinol (DMKH2) to menaquinol (MKH2) and the conversion of 2-polyprenyl-6-methoxy-1,4-benzoquinol (DDMQH2) to 2-polyprenyl-3-methyl-6-methoxy-1,4-benzoquinol (DMQH2). In Bordetella bronchiseptica (strain ATCC BAA-588 / NCTC 13252 / RB50) (Alcaligenes bronchisepticus), this protein is Ubiquinone/menaquinone biosynthesis C-methyltransferase UbiE.